Consider the following 252-residue polypeptide: Delta-like protein dsl-1 (252 aa).

The first 17 residues, 1-17, serve as a signal peptide directing secretion; the sequence is MLKYLIFLAILISVVHS. The region spanning 120-164 is the DSL domain; the sequence is IKCNRYWHGLHCDHFCNDDFARTINRRCTQNGTLGCLEGFHGPNC. 6 disulfide bridges follow: C122–C131, C135–C147, C155–C164, C173–C181, C175–C197, and C199–C209. In terms of domain architecture, EGF-like spans 169–210; sequence PADSCKCQNGGKCVSSLENTWAQNGSLICECRLGHFEGKHCE.

As to quaternary structure, may interact with lin-12/Notch receptor.

It is found in the secreted. Functionally, probable secreted Notch ligand involved in the mediation of Notch signaling. Involved in the lin-12/Notch pathway-mediated signaling of cell fate in vulval precursor cells (VPCs), acting redundantly with lag-2, apx-1 and osm-11. May also be involved in glp-1/Notch signaling. This chain is Delta-like protein dsl-1, found in Caenorhabditis elegans.